We begin with the raw amino-acid sequence, 309 residues long: Wall-associated proteinase (309 aa).

Asparagine 190 and asparagine 295 each carry an N-linked (GlcNAc...) asparagine glycan.

It localises to the secreted. The protein localises to the cell wall. Its subcellular location is the membrane. Functionally, may participate in wall plasticization and/or intussusception or in cell wall turnover. The protein is Wall-associated proteinase of Coccidioides immitis (strain RS) (Valley fever fungus).